Consider the following 36-residue polypeptide: Egg-laying hormone (36 aa).

The residue at position 36 (K36) is a Lysine amide.

It belongs to the molluscan ELH family. In terms of tissue distribution, bag cell neurons.

It localises to the secreted. ELH acts as a neurotransmitter locally, upon neurons of the abdominal ganglion and as a hormone by diffusing into the circulating hemolymph and modulating the activity of other organs. It specifically causes contraction of smooth muscle in the ovotestis and expulsion of the egg string. The polypeptide is Egg-laying hormone (Aplysia fasciata (Mottled sea hare)).